The following is a 180-amino-acid chain: MANRLKEKYTNEVIPALTEKFNYSSVMAVPKVDKIVINMGVGEAVNNAKTLEKAAAELALISGQKPLITKAKKSIAGFRLREGVAIGAKVTLRGERMYEFLDKLVSVSLPRVRDFHGVPTKSFDGRGNYTLGVKEQLIFPEINFDDVDKVRGMDIVIVTTANTDEEGRELLKGLGMPFAK.

This sequence belongs to the universal ribosomal protein uL5 family. As to quaternary structure, part of the 50S ribosomal subunit; part of the 5S rRNA/L5/L18/L25 subcomplex. Contacts the 5S rRNA and the P site tRNA. Forms a bridge to the 30S subunit in the 70S ribosome.

This is one of the proteins that bind and probably mediate the attachment of the 5S RNA into the large ribosomal subunit, where it forms part of the central protuberance. In the 70S ribosome it contacts protein S13 of the 30S subunit (bridge B1b), connecting the 2 subunits; this bridge is implicated in subunit movement. Contacts the P site tRNA; the 5S rRNA and some of its associated proteins might help stabilize positioning of ribosome-bound tRNAs. The chain is Large ribosomal subunit protein uL5 from Streptococcus thermophilus (strain ATCC BAA-491 / LMD-9).